The chain runs to 384 residues: Involucrin (384 aa).

The segment at 1–384 (MSQQHTLPVT…LPEQPQEPEV (384 aa)) is disordered. Composition is skewed to basic and acidic residues over residues 56–65 (PSKHEEKGTD) and 80–134 (PELH…ELHL). Residues 137-146 (QQQQESQEQE) are compositionally biased toward low complexity. Residues 179-208 (KQREPQESQEQRLHLGKEQESQEQRLHLGE) show a composition bias toward basic and acidic residues. Residues 239 to 267 (PEQRLQLLPQGPQEQELHLGKQQQQQESQ) show a composition bias toward low complexity. Basic and acidic residues-rich tracts occupy residues 268-308 (QHQE…KKLL) and 315-336 (EAVK…KEQL).

Belongs to the involucrin family. As to quaternary structure, directly or indirectly cross-linked to cornifelin (CNFN). In terms of processing, substrate of transglutaminase. Specific glutamines or lysines are cross-linked to keratins, desmoplakin and to inter involucrin molecules. In terms of tissue distribution, keratinocytes of epidermis and other stratified squamous epithelia.

It localises to the cytoplasm. Functionally, part of the insoluble cornified cell envelope (CE) of stratified squamous epithelia. The chain is Involucrin (IVL) from Otolemur crassicaudatus (Brown greater galago).